The following is a 344-amino-acid chain: Ion-translocating oxidoreductase complex subunit D (344 aa).

Transmembrane regions (helical) follow at residues 23–43 (LVLGACVPGLLTLTWLYGPGT), 44–64 (LLNLAWASLVALACEAAMLAL), 77–99 (SALVTALLLAVALPPYAPWWLTL), and 120–140 (PFNPAMLGYVVALVSFPLEMT). Thr-172 bears the FMN phosphoryl threonine mark. 5 consecutive transmembrane segments (helical) span residues 198 to 218 (LGSAGSEWVNLAFLLGGLFLL), 222 to 242 (LFTWHAPLGMLAGLFAMSLLF), 252 to 272 (GSPLFHLFSGATMLGAFFIVT), 285 to 305 (LVFGLGVGVLTYVIRAWGGYP), and 306 to 326 (DGMAFAVLLMNLAAPTIDYYT).

This sequence belongs to the NqrB/RnfD family. In terms of assembly, the complex is composed of six subunits: RnfA, RnfB, RnfC, RnfD, RnfE and RnfG. The cofactor is FMN.

The protein resides in the cell inner membrane. In terms of biological role, part of a membrane-bound complex that couples electron transfer with translocation of ions across the membrane. The polypeptide is Ion-translocating oxidoreductase complex subunit D (Pseudomonas aeruginosa (strain LESB58)).